The primary structure comprises 237 residues: tRNA (guanine-N(1)-)-methyltransferase (237 aa).

S-adenosyl-L-methionine is bound by residues G113 and 133–138; that span reads MGDYIL.

The protein belongs to the RNA methyltransferase TrmD family. Homodimer.

The protein localises to the cytoplasm. The enzyme catalyses guanosine(37) in tRNA + S-adenosyl-L-methionine = N(1)-methylguanosine(37) in tRNA + S-adenosyl-L-homocysteine + H(+). In terms of biological role, specifically methylates guanosine-37 in various tRNAs. The chain is tRNA (guanine-N(1)-)-methyltransferase from Wolinella succinogenes (strain ATCC 29543 / DSM 1740 / CCUG 13145 / JCM 31913 / LMG 7466 / NCTC 11488 / FDC 602W) (Vibrio succinogenes).